Reading from the N-terminus, the 785-residue chain is Semaphorin-3F (785 aa).

The N-terminal stretch at 1 to 18 (MLVAGLLLWASLLTGAWP) is a signal peptide. A Sema domain is found at 31–545 (RVRLSFKELK…SAVGVTHLSL (515 aa)). N-linked (GlcNAc...) asparagine glycosylation occurs at asparagine 53. A disulfide bridge links cysteine 104 with cysteine 115. A glycan (N-linked (GlcNAc...) asparagine) is linked at asparagine 126. 5 disulfide bridges follow: cysteine 133/cysteine 142, cysteine 300/cysteine 412, cysteine 324/cysteine 372, cysteine 548/cysteine 566, and cysteine 678/cysteine 746. Residues 605–690 (ANKNAVESVQ…TENNFKHVVT (86 aa)) form the Ig-like C2-type domain. The tract at residues 752–785 (HVPPSPREAPGAPRSPEPQDQKKPRNRRHHPPDT) is disordered. The span at 775–785 (PRNRRHHPPDT) shows a compositional bias: basic residues.

It belongs to the semaphorin family. Expressed abundantly but differentially in a variety of neural and nonneural tissues. There is high expression in mammary gland, kidney, fetal brain, and lung and lower expression in heart and liver.

It is found in the secreted. Its function is as follows. May play a role in cell motility and cell adhesion. The protein is Semaphorin-3F (SEMA3F) of Homo sapiens (Human).